We begin with the raw amino-acid sequence, 24 residues long: Brevinin-1Pe (24 aa).

An intrachain disulfide couples C18 to C24.

In terms of tissue distribution, expressed by the skin glands.

Its subcellular location is the secreted. Its function is as follows. Antibacterial activity against Gram-positive bacterium S.aureus and Gram-negative bacterium E.coli. Has activity against C.albicans. This chain is Brevinin-1Pe, found in Lithobates pipiens (Northern leopard frog).